Here is a 394-residue protein sequence, read N- to C-terminus: WAT1-related protein At2g40900 (394 aa).

10 helical membrane-spanning segments follow: residues 13-33 (FAMV…KTVL), 40-60 (YVLV…FALL), 67-87 (SKMT…GPVI), 102-122 (TFSS…ATLF), 142-162 (LVTV…INFF), 180-200 (AAVF…LQAA), 209-229 (LSMS…LAFV), 245-265 (LLAS…VQGL), 273-293 (VFVT…SFFV), and 298-318 (IYLG…AVLW). 2 consecutive EamA domains span residues 22 to 147 (YAGM…TVVG) and 189 to 317 (LSWA…YAVL).

This sequence belongs to the drug/metabolite transporter (DMT) superfamily. Plant drug/metabolite exporter (P-DME) (TC 2.A.7.4) family.

It localises to the membrane. This is WAT1-related protein At2g40900 from Arabidopsis thaliana (Mouse-ear cress).